Here is a 208-residue protein sequence, read N- to C-terminus: Protein-L-isoaspartate O-methyltransferase (208 aa).

Residue Ser-59 is part of the active site.

Belongs to the methyltransferase superfamily. L-isoaspartyl/D-aspartyl protein methyltransferase family.

The protein resides in the cytoplasm. The catalysed reaction is [protein]-L-isoaspartate + S-adenosyl-L-methionine = [protein]-L-isoaspartate alpha-methyl ester + S-adenosyl-L-homocysteine. Functionally, catalyzes the methyl esterification of L-isoaspartyl residues in peptides and proteins that result from spontaneous decomposition of normal L-aspartyl and L-asparaginyl residues. It plays a role in the repair and/or degradation of damaged proteins. The sequence is that of Protein-L-isoaspartate O-methyltransferase from Yersinia enterocolitica serotype O:8 / biotype 1B (strain NCTC 13174 / 8081).